A 378-amino-acid chain; its full sequence is Polygalacturonase (378 aa).

A signal peptide spans Met-1 to Ala-20. Residues Cys-39 and Cys-57 are joined by a disulfide bond. PbH1 repeat units follow at residues Ser-172–Asp-203, Ser-204–Ser-225, Gly-226–Ser-246, Val-255–Ala-276, and Ile-284–Gln-306. Catalysis depends on Asp-218, which acts as the Proton donor. Cys-220 and Cys-236 form a disulfide bridge. Residue His-240 is part of the active site. 2 disulfides stabilise this stretch: Cys-346-Cys-352 and Cys-370-Cys-378.

The protein belongs to the glycosyl hydrolase 28 family.

The protein localises to the secreted. It catalyses the reaction (1,4-alpha-D-galacturonosyl)n+m + H2O = (1,4-alpha-D-galacturonosyl)n + (1,4-alpha-D-galacturonosyl)m.. The sequence is that of Polygalacturonase (PEPG1) from Penicillium expansum (Blue mold rot fungus).